We begin with the raw amino-acid sequence, 316 residues long: Probable metal transport system membrane protein TC_0342 (316 aa).

10 consecutive transmembrane segments (helical) span residues 1 to 21 (MFAS…IVFF), 39 to 59 (IQVI…TFLV), 64 to 84 (AMYA…ACLF), 94 to 114 (QNLT…IHFI), 124 to 144 (ASTA…LVFL), 171 to 191 (FLVL…FICV), 196 to 216 (VFAF…MFLL), 226 to 246 (AVGV…AKLI), 252 to 272 (EMMG…PALS), and 286 to 306 (SGLA…TVFV).

Belongs to the ABC-3 integral membrane protein family.

It is found in the cell inner membrane. In terms of biological role, part of an ATP-driven transport system TC_0338/TC_0339/TC_0341/TC_0342 for a metal. The polypeptide is Probable metal transport system membrane protein TC_0342 (Chlamydia muridarum (strain MoPn / Nigg)).